The following is a 157-amino-acid chain: Small ribosomal subunit protein uS17 (157 aa).

The protein belongs to the universal ribosomal protein uS17 family.

This Dunaliella tertiolecta (Green alga) protein is Small ribosomal subunit protein uS17 (RPS11).